A 61-amino-acid polypeptide reads, in one-letter code: Keratin-associated protein 8-1 (61 aa).

An 11 X 2 AA repeats of G-[YCGS] region spans residues 13 to 49; sequence GCYWGSYGYPLGYSVGCGYGSTYSPVGYGLGYGYNGC.

It belongs to the KRTAP type 8 family. In terms of assembly, interacts with hair keratins. Expression restricted exclusively to the cortical cells of hair follicles.

In terms of biological role, in the hair cortex, hair keratin intermediate filaments are embedded in an interfilamentous matrix, consisting of hair keratin-associated proteins (KRTAP), which are essential for the formation of a rigid and resistant hair shaft through their extensive disulfide bond cross-linking with abundant cysteine residues of hair keratins. The matrix proteins include the high-sulfur and high-glycine-tyrosine keratins. This chain is Keratin-associated protein 8-1 (Krtap8-1), found in Mus musculus (Mouse).